A 206-amino-acid polypeptide reads, in one-letter code: Octanoyltransferase (206 aa).

Positions 30 to 206 (PETNDEIWLV…EFVTLLNNSI (177 aa)) constitute a BPL/LPL catalytic domain. Substrate contacts are provided by residues 69–76 (RGGQVTYH), 137–139 (SLG), and 150–152 (GIA). Residue C168 is the Acyl-thioester intermediate of the active site.

Belongs to the LipB family.

It is found in the cytoplasm. It catalyses the reaction octanoyl-[ACP] + L-lysyl-[protein] = N(6)-octanoyl-L-lysyl-[protein] + holo-[ACP] + H(+). It participates in protein modification; protein lipoylation via endogenous pathway; protein N(6)-(lipoyl)lysine from octanoyl-[acyl-carrier-protein]: step 1/2. Catalyzes the transfer of endogenously produced octanoic acid from octanoyl-acyl-carrier-protein onto the lipoyl domains of lipoate-dependent enzymes. Lipoyl-ACP can also act as a substrate although octanoyl-ACP is likely to be the physiological substrate. The polypeptide is Octanoyltransferase (Francisella tularensis subsp. tularensis (strain FSC 198)).